Consider the following 287-residue polypeptide: MDWTMISGSRDESLHAARDYWRRLNESECFDIEGIEAPPGAIALIPYDCQLPNSFHPLPLWVKLYASAGLHRFNMLEVLVNERSVGKLNIIVPIARPKGVTTNERFIPCDCFSVDDKLPQWPSHDSFNDRKRFYSVKESELQNNDWINLYLELVLCAIQKVRISDSDLSKLKIVKAVIETKEDMVPPNERLNAKTAVVYITFKGLANARIAAGEHYERKAIIRRIFNEHTGHLSLLGDLIGEKKFVNIDPVTYFNSPAYLEDITHELPPESPWMDILAGTGSMDQID.

It belongs to the UPF0725 (EMB2204) family.

This is UPF0725 protein At1g19060 from Arabidopsis thaliana (Mouse-ear cress).